The sequence spans 321 residues: MRQVDGVKLLGRLGDGVNELRGRLTPDAPMDRVTWFRAGGLAEVMFQPHDTDDLIAFLKILPEDVPLTVVGVGSNLLVRDGGIPGVVVRLSAKGFGSVELADENRIKAGAICPDKHIAAMAMDNGIGGFHFYYGIPGSIGGALRMNAGANGGETRERVVEVYAVDRQGNQHVLSNADMGYSYRHSGADAGLIFTGALFEGYPEDKAKIRADMDAVRHHRETVQPIREQTGGSTFKNPEGHSAWELIDEAGGRGLVIGGAQMSSLHCNFMINTGHATGYDLEYLGETIRRRVFEKSGIRLEWEIKRLGLFMPGREVEPFLGA.

An FAD-binding PCMH-type domain is found at 36–203; sequence FRAGGLAEVM…TGALFEGYPE (168 aa). Arginine 183 is an active-site residue. Serine 232 serves as the catalytic Proton donor. Residue glutamate 302 is part of the active site.

The protein belongs to the MurB family. It depends on FAD as a cofactor.

Its subcellular location is the cytoplasm. It carries out the reaction UDP-N-acetyl-alpha-D-muramate + NADP(+) = UDP-N-acetyl-3-O-(1-carboxyvinyl)-alpha-D-glucosamine + NADPH + H(+). The protein operates within cell wall biogenesis; peptidoglycan biosynthesis. In terms of biological role, cell wall formation. The protein is UDP-N-acetylenolpyruvoylglucosamine reductase of Agrobacterium fabrum (strain C58 / ATCC 33970) (Agrobacterium tumefaciens (strain C58)).